We begin with the raw amino-acid sequence, 167 residues long: NADH-quinone oxidoreductase subunit B (167 aa).

Positions 40, 41, 105, and 134 each coordinate [4Fe-4S] cluster.

Belongs to the complex I 20 kDa subunit family. In terms of assembly, NDH-1 is composed of 14 different subunits. Subunits NuoB, C, D, E, F, and G constitute the peripheral sector of the complex. [4Fe-4S] cluster is required as a cofactor.

Its subcellular location is the cell inner membrane. It catalyses the reaction a quinone + NADH + 5 H(+)(in) = a quinol + NAD(+) + 4 H(+)(out). Functionally, NDH-1 shuttles electrons from NADH, via FMN and iron-sulfur (Fe-S) centers, to quinones in the respiratory chain. The immediate electron acceptor for the enzyme in this species is believed to be ubiquinone. Couples the redox reaction to proton translocation (for every two electrons transferred, four hydrogen ions are translocated across the cytoplasmic membrane), and thus conserves the redox energy in a proton gradient. The polypeptide is NADH-quinone oxidoreductase subunit B (Campylobacter jejuni subsp. jejuni serotype O:2 (strain ATCC 700819 / NCTC 11168)).